A 150-amino-acid polypeptide reads, in one-letter code: Arginine repressor (150 aa).

Belongs to the ArgR family.

The protein localises to the cytoplasm. Its pathway is amino-acid biosynthesis; L-arginine biosynthesis [regulation]. Functionally, regulates arginine biosynthesis genes. This chain is Arginine repressor, found in Clostridium botulinum (strain Okra / Type B1).